Reading from the N-terminus, the 187-residue chain is Signal peptidase I U (187 aa).

At 1–16 the chain is on the cytoplasmic side; that stretch reads MNAKTITLKKKRKIKT. A helical transmembrane segment spans residues 17–37; sequence IVVLSIIMIAALIFTIRLVFY. Residues 38 to 187 lie on the Extracellular side of the membrane; it reads KPFLIEGSSM…YPFGEMRQAK (150 aa). Catalysis depends on residues Ser46 and Lys88.

The protein belongs to the peptidase S26 family.

Its subcellular location is the cell membrane. It carries out the reaction Cleavage of hydrophobic, N-terminal signal or leader sequences from secreted and periplasmic proteins.. The sequence is that of Signal peptidase I U (sipU) from Bacillus subtilis (strain 168).